A 341-amino-acid chain; its full sequence is Phenylalanine--tRNA ligase alpha subunit (341 aa).

E254 contacts Mg(2+).

The protein belongs to the class-II aminoacyl-tRNA synthetase family. Phe-tRNA synthetase alpha subunit type 1 subfamily. In terms of assembly, tetramer of two alpha and two beta subunits. Mg(2+) serves as cofactor.

Its subcellular location is the cytoplasm. It catalyses the reaction tRNA(Phe) + L-phenylalanine + ATP = L-phenylalanyl-tRNA(Phe) + AMP + diphosphate + H(+). The sequence is that of Phenylalanine--tRNA ligase alpha subunit (pheS) from Mycoplasma pneumoniae (strain ATCC 29342 / M129 / Subtype 1) (Mycoplasmoides pneumoniae).